The primary structure comprises 229 residues: Biosynthetic peptidoglycan transglycosylase (229 aa).

Residues 10–30 (LLLALVLVVLYQFWIFMHILW) traverse the membrane as a helical segment.

The protein belongs to the glycosyltransferase 51 family.

Its subcellular location is the cell inner membrane. The catalysed reaction is [GlcNAc-(1-&gt;4)-Mur2Ac(oyl-L-Ala-gamma-D-Glu-L-Lys-D-Ala-D-Ala)](n)-di-trans,octa-cis-undecaprenyl diphosphate + beta-D-GlcNAc-(1-&gt;4)-Mur2Ac(oyl-L-Ala-gamma-D-Glu-L-Lys-D-Ala-D-Ala)-di-trans,octa-cis-undecaprenyl diphosphate = [GlcNAc-(1-&gt;4)-Mur2Ac(oyl-L-Ala-gamma-D-Glu-L-Lys-D-Ala-D-Ala)](n+1)-di-trans,octa-cis-undecaprenyl diphosphate + di-trans,octa-cis-undecaprenyl diphosphate + H(+). Its pathway is cell wall biogenesis; peptidoglycan biosynthesis. Peptidoglycan polymerase that catalyzes glycan chain elongation from lipid-linked precursors. This is Biosynthetic peptidoglycan transglycosylase from Methylobacillus flagellatus (strain ATCC 51484 / DSM 6875 / VKM B-1610 / KT).